A 643-amino-acid chain; its full sequence is Probable potassium transport system protein Kup 2 (643 aa).

A disordered region spans residues 1–20 (MSSHVPSFLRGTPDMTAHGG). The next 12 helical transmembrane spans lie at 27–47 (VAGLMLAAIGVVFGDIGTSPL), 70–90 (VLSLVFWAITIIVSFKYVIII), 120–140 (LMVSALGIFAAALFYGDSIIT), 157–177 (PHLEQWVVPLTIVILFVLFAI), 185–205 (VGKMFGPVMLVWFLTLAILGI), 231–251 (GWHAFLALGSVVLAVTGAEAL), 267–287 (WYLLVLPALILNYFGQGALLI), 300–320 (LAPASLALPLVILATLATVIA), 357–377 (IYLPFVNWLLMCMVMVLVVGF), 389–409 (VAVTGTMVIDALLVGTVMLLI), 419–439 (WLIGGFLVVDLAFFLANSIKI), and 440–460 (PDGGWFPLVVGGLLFTILTTW).

It belongs to the HAK/KUP transporter (TC 2.A.72) family.

The protein localises to the cell inner membrane. It carries out the reaction K(+)(in) + H(+)(in) = K(+)(out) + H(+)(out). Functionally, transport of potassium into the cell. Likely operates as a K(+):H(+) symporter. The protein is Probable potassium transport system protein Kup 2 of Paramagnetospirillum magneticum (strain ATCC 700264 / AMB-1) (Magnetospirillum magneticum).